Reading from the N-terminus, the 776-residue chain is Bifunctional lysine-specific demethylase and histidyl-hydroxylase NO66 (776 aa).

3 disordered regions span residues 1-57, 87-126, and 165-288; these read MGKK…EPKF, EQNG…AHKH, and ILDE…DDEG. Basic and acidic residues-rich tracts occupy residues 47 to 57 and 98 to 119; these read HYKEPSKEPKF and EISP…DGVA. Positions 166–204 are enriched in acidic residues; that stretch reads LDEEVEDEEIDEEEFEDEEEVEDEEGMDEDETEIDESEM. Residues 206–216 are compositionally biased toward basic and acidic residues; sequence VDPKDIERCIE. A compositionally biased stretch (acidic residues) spans 217–288; the sequence is FEDVDDEDEM…EMDADSDDEG (72 aa). The region spanning 425–569 is the JmjC domain; that stretch reads QLVNPQTFDD…NLMEKVIPEA (145 aa). 3 residues coordinate Fe cation: H468, D470, and H535.

It belongs to the ROX family. NO66 subfamily. It depends on Fe(2+) as a cofactor.

Its subcellular location is the nucleus. The enzyme catalyses N(6),N(6)-dimethyl-L-lysyl(36)-[histone H3] + 2 2-oxoglutarate + 2 O2 = L-lysyl(36)-[histone H3] + 2 formaldehyde + 2 succinate + 2 CO2. Oxygenase that can act as both a histone lysine demethylase and a ribosomal histidine hydroxylase. Specifically demethylates 'Lys-4' (H3K4me) and 'Lys-36' (H3K36me) of histone H3, thereby playing a central role in histone code. This is Bifunctional lysine-specific demethylase and histidyl-hydroxylase NO66 (jmjc-1) from Caenorhabditis briggsae.